A 393-amino-acid chain; its full sequence is Riboflavin biosynthesis protein RibBA (393 aa).

The tract at residues 1–200 is DHBP synthase; sequence MQFDTIELAI…IKSLVAFRKA (200 aa). D-ribulose 5-phosphate contacts are provided by residues 27–28, aspartate 32, 139–143, and glutamate 163; these read RE and RNGHT. A Mg(2+)-binding site is contributed by glutamate 28. Mg(2+) is bound at residue histidine 142. A GTP cyclohydrolase II region spans residues 201–393; it reads VELNVNLKAK…TKKNKMGHLI (193 aa). 249–253 lines the GTP pocket; it reads RMHSA. The Zn(2+) site is built by cysteine 254, cysteine 265, and cysteine 267. GTP contacts are provided by residues glutamine 270, 291–293, and threonine 313; that span reads EGR. Catalysis depends on aspartate 325, which acts as the Proton acceptor; for GTP cyclohydrolase activity. The active-site Nucleophile; for GTP cyclohydrolase activity is arginine 327. Residues serine 348 and lysine 353 each coordinate GTP.

In the N-terminal section; belongs to the DHBP synthase family. This sequence in the C-terminal section; belongs to the GTP cyclohydrolase II family. Requires Mg(2+) as cofactor. Mn(2+) serves as cofactor. It depends on Zn(2+) as a cofactor.

The enzyme catalyses D-ribulose 5-phosphate = (2S)-2-hydroxy-3-oxobutyl phosphate + formate + H(+). It carries out the reaction GTP + 4 H2O = 2,5-diamino-6-hydroxy-4-(5-phosphoribosylamino)-pyrimidine + formate + 2 phosphate + 3 H(+). Its pathway is cofactor biosynthesis; riboflavin biosynthesis; 2-hydroxy-3-oxobutyl phosphate from D-ribulose 5-phosphate: step 1/1. The protein operates within cofactor biosynthesis; riboflavin biosynthesis; 5-amino-6-(D-ribitylamino)uracil from GTP: step 1/4. Its function is as follows. Catalyzes the conversion of D-ribulose 5-phosphate to formate and 3,4-dihydroxy-2-butanone 4-phosphate. Functionally, catalyzes the conversion of GTP to 2,5-diamino-6-ribosylamino-4(3H)-pyrimidinone 5'-phosphate (DARP), formate and pyrophosphate. This is Riboflavin biosynthesis protein RibBA from Staphylococcus epidermidis (strain ATCC 35984 / DSM 28319 / BCRC 17069 / CCUG 31568 / BM 3577 / RP62A).